The sequence spans 196 residues: V-type proton ATPase proteolipid subunit (196 aa).

Residues 1 to 25 lie on the Lumenal side of the membrane; that stretch reads MFQLLSFLLSGEATAVERIITDACP. A helical transmembrane segment spans residues 26-46; sequence VYAPFFGAMGVTAALVFTVMG. Residues 47–72 lie on the Cytoplasmic side of the membrane; that stretch reads AAYGTAKASVGISNMGVMKPDLVIKA. The helical transmembrane segment at 73–93 threads the bilayer; it reads FIPVIFAGVIAIYGLIICVIL. The Lumenal portion of the chain corresponds to 94-111; that stretch reads VGGIKPNANYTLMKSFTD. The helical transmembrane segment at 112 to 132 threads the bilayer; it reads LGAGLTVGLCGLAAGMAIGIV. Over 133 to 150 the chain is Cytoplasmic; it reads GDSGVRAFGQQPKLYVIM. Residues 151-171 form a helical membrane-spanning segment; the sequence is MLILIFSEALGLYGLIIGILL. Topologically, residues 172-196 are lumenal; that stretch reads SSVSDTYCPGQALVPLNSGNVIGKN.

This sequence belongs to the V-ATPase proteolipid subunit family. In terms of assembly, V-ATPase is a heteromultimeric enzyme composed of a peripheral catalytic V1 complex (main components: subunits A, B, C, D, E, and F) attached to an integral membrane V0 proton pore complex (main component: the proteolipid protein; which is present as a hexamer that forms the proton-conducting pore).

The protein resides in the vacuole membrane. In terms of biological role, proton-conducting pore forming subunit of the membrane integral V0 complex of vacuolar ATPase. V-ATPase is responsible for acidifying a variety of intracellular compartments in eukaryotic cells. The chain is V-type proton ATPase proteolipid subunit (vatP) from Dictyostelium discoideum (Social amoeba).